The following is a 182-amino-acid chain: 3-hydroxyanthranilate 3,4-dioxygenase (182 aa).

O2 is bound at residue arginine 46. Fe cation-binding residues include histidine 50, glutamate 56, and histidine 96. Glutamate 56 is a substrate binding site. 2 residues coordinate substrate: arginine 100 and glutamate 111. 4 residues coordinate Fe cation: cysteine 126, cysteine 129, cysteine 163, and cysteine 166.

It belongs to the 3-HAO family. In terms of assembly, homodimer. Fe(2+) serves as cofactor.

The catalysed reaction is 3-hydroxyanthranilate + O2 = (2Z,4Z)-2-amino-3-carboxymuconate 6-semialdehyde. It functions in the pathway cofactor biosynthesis; NAD(+) biosynthesis; quinolinate from L-kynurenine: step 3/3. Its function is as follows. Catalyzes the oxidative ring opening of 3-hydroxyanthranilate to 2-amino-3-carboxymuconate semialdehyde, which spontaneously cyclizes to quinolinate. This is 3-hydroxyanthranilate 3,4-dioxygenase from Brucella anthropi (strain ATCC 49188 / DSM 6882 / CCUG 24695 / JCM 21032 / LMG 3331 / NBRC 15819 / NCTC 12168 / Alc 37) (Ochrobactrum anthropi).